Reading from the N-terminus, the 254-residue chain is Thiazole synthase (254 aa).

Lys-93 functions as the Schiff-base intermediate with DXP in the catalytic mechanism. 1-deoxy-D-xylulose 5-phosphate contacts are provided by residues Gly-154, 181 to 182 (AG), and 203 to 204 (NT).

This sequence belongs to the ThiG family. As to quaternary structure, homotetramer. Forms heterodimers with either ThiH or ThiS.

Its subcellular location is the cytoplasm. It carries out the reaction [ThiS sulfur-carrier protein]-C-terminal-Gly-aminoethanethioate + 2-iminoacetate + 1-deoxy-D-xylulose 5-phosphate = [ThiS sulfur-carrier protein]-C-terminal Gly-Gly + 2-[(2R,5Z)-2-carboxy-4-methylthiazol-5(2H)-ylidene]ethyl phosphate + 2 H2O + H(+). It functions in the pathway cofactor biosynthesis; thiamine diphosphate biosynthesis. Catalyzes the rearrangement of 1-deoxy-D-xylulose 5-phosphate (DXP) to produce the thiazole phosphate moiety of thiamine. Sulfur is provided by the thiocarboxylate moiety of the carrier protein ThiS. In vitro, sulfur can be provided by H(2)S. The chain is Thiazole synthase from Ruegeria pomeroyi (strain ATCC 700808 / DSM 15171 / DSS-3) (Silicibacter pomeroyi).